The primary structure comprises 288 residues: Cyclin-dependent kinase 2 homolog (288 aa).

A Protein kinase domain is found at 4 to 284; the sequence is YHGLEKIGEG…AKQAIEHPYF (281 aa). Residues 10–18 and K32 contribute to the ATP site; that span reads IGEGTYGVV. The residue at position 14 (T14) is a Phosphothreonine. Y15 carries the phosphotyrosine modification. D125 functions as the Proton acceptor in the catalytic mechanism. T158 carries the phosphothreonine modification.

It belongs to the protein kinase superfamily. CMGC Ser/Thr protein kinase family. CDC2/CDKX subfamily. As to quaternary structure, may form a complex composed of at least the catalytic subunit CRK2 and a cyclin. Requires Mg(2+) as cofactor.

It is found in the cytoplasm. The catalysed reaction is L-seryl-[protein] + ATP = O-phospho-L-seryl-[protein] + ADP + H(+). It carries out the reaction L-threonyl-[protein] + ATP = O-phospho-L-threonyl-[protein] + ADP + H(+). It catalyses the reaction [DNA-directed RNA polymerase] + ATP = phospho-[DNA-directed RNA polymerase] + ADP + H(+). With respect to regulation, phosphorylation at Thr-14 or Tyr-15 inactivates the enzyme, while phosphorylation at Thr-158 activates it. Its function is as follows. Serine/threonine-protein kinase. Involved in the control of the cell cycle. Required for entry into S-phase and mitosis. Probable component of the kinase complex that phosphorylates the repetitive C-terminus of RNA polymerase II. This is Cyclin-dependent kinase 2 homolog from Plasmodium chabaudi chabaudi.